The primary structure comprises 121 residues: Small ribosomal subunit protein uS13 (121 aa).

The interval 90–121 (RHRRGLPVRGQHTKNNARTRKGKKVSIAGRKK) is disordered.

This sequence belongs to the universal ribosomal protein uS13 family. As to quaternary structure, part of the 30S ribosomal subunit. Forms a loose heterodimer with protein S19. Forms two bridges to the 50S subunit in the 70S ribosome.

Located at the top of the head of the 30S subunit, it contacts several helices of the 16S rRNA. In the 70S ribosome it contacts the 23S rRNA (bridge B1a) and protein L5 of the 50S subunit (bridge B1b), connecting the 2 subunits; these bridges are implicated in subunit movement. Contacts the tRNAs in the A and P-sites. The protein is Small ribosomal subunit protein uS13 of Lactiplantibacillus plantarum (strain ATCC BAA-793 / NCIMB 8826 / WCFS1) (Lactobacillus plantarum).